A 416-amino-acid chain; its full sequence is Serine hydroxymethyltransferase (416 aa).

(6S)-5,6,7,8-tetrahydrofolate contacts are provided by residues leucine 121 and 125–127 (GHL). Lysine 229 is modified (N6-(pyridoxal phosphate)lysine).

The protein belongs to the SHMT family. Homodimer. It depends on pyridoxal 5'-phosphate as a cofactor.

It is found in the cytoplasm. It catalyses the reaction (6R)-5,10-methylene-5,6,7,8-tetrahydrofolate + glycine + H2O = (6S)-5,6,7,8-tetrahydrofolate + L-serine. The protein operates within one-carbon metabolism; tetrahydrofolate interconversion. It participates in amino-acid biosynthesis; glycine biosynthesis; glycine from L-serine: step 1/1. In terms of biological role, catalyzes the reversible interconversion of serine and glycine with tetrahydrofolate (THF) serving as the one-carbon carrier. This reaction serves as the major source of one-carbon groups required for the biosynthesis of purines, thymidylate, methionine, and other important biomolecules. Also exhibits THF-independent aldolase activity toward beta-hydroxyamino acids, producing glycine and aldehydes, via a retro-aldol mechanism. This chain is Serine hydroxymethyltransferase, found in Neisseria meningitidis serogroup A / serotype 4A (strain DSM 15465 / Z2491).